Here is a 704-residue protein sequence, read N- to C-terminus: Chloride intracellular channel protein 6 (704 aa).

Low complexity predominate over residues 1–13 (MAEAAEPEGVAPG). The disordered stretch occupies residues 1-446 (MAEAAEPEGV…EDGEASEPRA (446 aa)). Residues 39–48 (EGPEGSEGAE) are compositionally biased toward acidic residues. S44 is subject to Phosphoserine. The span at 67–83 (RGPEAEARGTRGAHGET) shows a compositional bias: basic and acidic residues. The segment covering 90 to 100 (PEGAEVPQGGE) has biased composition (low complexity). Residues 121-147 (PRGEAQREPEDSAAPERQEEAEQRPEV) show a composition bias toward basic and acidic residues. Repeat copies occupy residues 157-166 (GDSVDAEGPL), 167-176 (GDNIEAEGPA), 177-186 (GDSVEAEGRV), 187-196 (GDSVDAEGPA), 197-206 (GDSVDAEGPL), 207-216 (GDNIQAEGPA), 217-226 (GDSVDAEGRV), 227-236 (GDSVDAEGPA), 237-246 (GDSVDAEGRV), 247-256 (GDSVEAGDPA), 257-266 (GDGVEAGVPA), 267-276 (GDSVEAEGPA), and 277-286 (GDSMDAEGPA). Positions 157–282 (GDSVDAEGPL…EGPAGDSMDA (126 aa)) are 13 X 10 AA tandem repeat of G-D-[SNG]-[VIM]-[DEQ]-A-[EAG]-[GDVE]-[PRG]-[LAVP]. A compositionally biased stretch (polar residues) spans 295-306 (EPQQSGDGSLSP). Basic and acidic residues-rich tracts occupy residues 350 to 360 (ARADAGEDRVG) and 371 to 385 (EERRERSPEGPREEE). S397 and S442 each carry phosphoserine. The segment covering 434–446 (GRREDGEASEPRA) has biased composition (basic and acidic residues). The G-site motif lies at 487-490 (CPFS). A helical membrane pass occupies residues 489–509 (FSQRLFMILWLKGVIFNVTTV). One can recognise a GST C-terminal domain in the interval 556-704 (YPKLGTQHPE…AYSDVAKRMK (149 aa)).

The protein belongs to the chloride channel CLIC family. As to quaternary structure, monomer (soluble state). Interacts with dopamine receptors DRD2, DRD3 and DRD4. Post-translationally, phosphorylated. In terms of tissue distribution, expressed in brain, placenta, pancreas, liver, lung, heart, kidney, liver, spleen, soleus muscle, and brown fat.

The protein resides in the cytoplasm. Its subcellular location is the cell membrane. It catalyses the reaction chloride(in) = chloride(out). Channel activity is redox- and pH-regulated. Inhibited by IAA-94. In terms of biological role, in the soluble state, catalyzes glutaredoxin-like thiol disulfide exchange reactions with reduced glutathione as electron donor. Can insert into membranes and form voltage-dependent chloride-selective channels. The channel opens upon membrane depolarization at positive voltages and closes at negative membrane voltages. May play a critical role in water-secreting cells, possibly through the regulation of chloride ion transport. In Homo sapiens (Human), this protein is Chloride intracellular channel protein 6.